The following is a 416-amino-acid chain: MAVLYFFREPETVFDCAAFICILQFLMGCNGFGIRRSTFRISWASRIYSMSVAIAAFCCLFGSLSVLLAEEDIRERLAKADNLVLSISALELLMSTLVFGVTVISLQVFARRHLGIYQRLAALDARLMSDFGANLNYRKMLRKNIAVLGIVTTIYLMAINSAAVQVASGHRALFLLFALCYTIVTGGPHFTGYVHMTLAEMLGIRFRLLQQLLQPEFLNWRFPQLHVQELRIRQVVSMIQELHYLIQEINRVYALSLWAAMAHDLAMSTSELYILFGQSVGIGQQNEEENGSCYRMLGYLALVMIPPLYKLLIAPFYCDRTIYEARRCLRLVEKLDDWFPQKSSLRPLVESLMSWRIQAKIQFTSGLDVVLSRKVIGLFTSILVNYLLILIQFAMTQKMGEQIEQQKIALQEWIGF.

Residues 1–13 (MAVLYFFREPETV) are Cytoplasmic-facing. A helical transmembrane segment spans residues 14–34 (FDCAAFICILQFLMGCNGFGI). The Extracellular segment spans residues 35–48 (RRSTFRISWASRIY). A helical transmembrane segment spans residues 49 to 69 (SMSVAIAAFCCLFGSLSVLLA). The Cytoplasmic portion of the chain corresponds to 70–83 (EEDIRERLAKADNL). The helical transmembrane segment at 84 to 104 (VLSISALELLMSTLVFGVTVI) threads the bilayer. Over 105–143 (SLQVFARRHLGIYQRLAALDARLMSDFGANLNYRKMLRK) the chain is Extracellular. Residues 144-164 (NIAVLGIVTTIYLMAINSAAV) traverse the membrane as a helical segment. Residues 165–171 (QVASGHR) lie on the Cytoplasmic side of the membrane. A helical transmembrane segment spans residues 172 to 192 (ALFLLFALCYTIVTGGPHFTG). The Extracellular segment spans residues 193–295 (YVHMTLAEML…NEEENGSCYR (103 aa)). Residue Asn-290 is glycosylated (N-linked (GlcNAc...) asparagine). A helical membrane pass occupies residues 296-316 (MLGYLALVMIPPLYKLLIAPF). The Cytoplasmic portion of the chain corresponds to 317–374 (YCDRTIYEARRCLRLVEKLDDWFPQKSSLRPLVESLMSWRIQAKIQFTSGLDVVLSRK). Residues 375–395 (VIGLFTSILVNYLLILIQFAM) form a helical membrane-spanning segment. Over 396 to 416 (TQKMGEQIEQQKIALQEWIGF) the chain is Extracellular.

It belongs to the insect chemoreceptor superfamily. Gustatory receptor (GR) family. Gr57a subfamily. In terms of tissue distribution, in larvae, is expressed in neurons of the terminal external chemosensory organ as well as in the dorsal pharyngeal sense organ.

It localises to the cell membrane. Functionally, probable gustatory receptor which mediates acceptance or avoidance behavior, depending on its substrates. This is Putative gustatory receptor 57a (Gr57a) from Drosophila melanogaster (Fruit fly).